Consider the following 620-residue polypeptide: uncharacterized protein (620 aa).

One can recognise a Radical SAM core domain in the interval 324–586; sequence RRYVTIAIIK…HPWEKGIYPT (263 aa). 3 residues coordinate [4Fe-4S] cluster: Cys-338, Cys-342, and Cys-345. At Lys-552 the chain carries N6-(pyridoxal phosphate)lysine.

The protein belongs to the radical SAM superfamily. KamA family. [4Fe-4S] cluster serves as cofactor. The cofactor is pyridoxal 5'-phosphate.

This is an uncharacterized protein from Methanocaldococcus jannaschii (strain ATCC 43067 / DSM 2661 / JAL-1 / JCM 10045 / NBRC 100440) (Methanococcus jannaschii).